A 147-amino-acid chain; its full sequence is Large ribosomal subunit protein uL15 (147 aa).

Over residues 1 to 13 the composition is skewed to basic and acidic residues; sequence MRLHDLKPAEGAR. Positions 1 to 58 are disordered; the sequence is MRLHDLKPAEGARRERKRVGRGIGSGHGKTSGRGQKGQKARSGGGVRPGFEGGQMPLT. Composition is skewed to gly residues over residues 21 to 35 and 42 to 52; these read RGIG…GRGQ and SGGGVRPGFEG.

Belongs to the universal ribosomal protein uL15 family. As to quaternary structure, part of the 50S ribosomal subunit.

Binds to the 23S rRNA. This is Large ribosomal subunit protein uL15 from Thermoanaerobacter sp. (strain X514).